The primary structure comprises 344 residues: Phenylalanine--tRNA ligase alpha subunit (344 aa).

E256 provides a ligand contact to Mg(2+).

Belongs to the class-II aminoacyl-tRNA synthetase family. Phe-tRNA synthetase alpha subunit type 1 subfamily. As to quaternary structure, tetramer of two alpha and two beta subunits. Mg(2+) serves as cofactor.

The protein localises to the cytoplasm. It catalyses the reaction tRNA(Phe) + L-phenylalanine + ATP = L-phenylalanyl-tRNA(Phe) + AMP + diphosphate + H(+). This chain is Phenylalanine--tRNA ligase alpha subunit, found in Oceanobacillus iheyensis (strain DSM 14371 / CIP 107618 / JCM 11309 / KCTC 3954 / HTE831).